The chain runs to 814 residues: Lon protease (814 aa).

The segment at 1–20 (MANEAHNIEHTDPEFRDDSA) is disordered. The region spanning 25 to 219 (LPLLPVRDTV…KINQHLAKEL (195 aa)) is the Lon N-terminal domain. 372 to 379 (GPPGVGKT) is an ATP binding site. A Lon proteolytic domain is found at 610–792 (TKRAGVVVGL…DEVLEIALPS (183 aa)). Catalysis depends on residues Ser-697 and Lys-740.

This sequence belongs to the peptidase S16 family. Homohexamer. Organized in a ring with a central cavity.

It is found in the cytoplasm. It catalyses the reaction Hydrolysis of proteins in presence of ATP.. In terms of biological role, ATP-dependent serine protease that mediates the selective degradation of mutant and abnormal proteins as well as certain short-lived regulatory proteins. Required for cellular homeostasis and for survival from DNA damage and developmental changes induced by stress. Degrades polypeptides processively to yield small peptide fragments that are 5 to 10 amino acids long. Binds to DNA in a double-stranded, site-specific manner. The polypeptide is Lon protease (Koribacter versatilis (strain Ellin345)).